A 232-amino-acid polypeptide reads, in one-letter code: Orotate phosphoribosyltransferase (232 aa).

5-phospho-alpha-D-ribose 1-diphosphate contacts are provided by residues Arg107, Lys108, Lys111, His113, and 133–141; that span reads EDLTTAGGS. Thr137 is an orotate binding site.

This sequence belongs to the purine/pyrimidine phosphoribosyltransferase family. PyrE subfamily. As to quaternary structure, homodimer. The cofactor is Mg(2+).

The enzyme catalyses orotidine 5'-phosphate + diphosphate = orotate + 5-phospho-alpha-D-ribose 1-diphosphate. It participates in pyrimidine metabolism; UMP biosynthesis via de novo pathway; UMP from orotate: step 1/2. In terms of biological role, catalyzes the transfer of a ribosyl phosphate group from 5-phosphoribose 1-diphosphate to orotate, leading to the formation of orotidine monophosphate (OMP). The sequence is that of Orotate phosphoribosyltransferase from Agrobacterium fabrum (strain C58 / ATCC 33970) (Agrobacterium tumefaciens (strain C58)).